The chain runs to 430 residues: Serine--tRNA ligase (430 aa).

237 to 239 contributes to the L-serine binding site; sequence TAE. Residue 268-270 coordinates ATP; sequence RSE. An L-serine-binding site is contributed by Glu-291. 355-358 provides a ligand contact to ATP; it reads EISS. Residue Ser-391 coordinates L-serine.

Belongs to the class-II aminoacyl-tRNA synthetase family. Type-1 seryl-tRNA synthetase subfamily. As to quaternary structure, homodimer. The tRNA molecule binds across the dimer.

It is found in the cytoplasm. The enzyme catalyses tRNA(Ser) + L-serine + ATP = L-seryl-tRNA(Ser) + AMP + diphosphate + H(+). The catalysed reaction is tRNA(Sec) + L-serine + ATP = L-seryl-tRNA(Sec) + AMP + diphosphate + H(+). It participates in aminoacyl-tRNA biosynthesis; selenocysteinyl-tRNA(Sec) biosynthesis; L-seryl-tRNA(Sec) from L-serine and tRNA(Sec): step 1/1. Functionally, catalyzes the attachment of serine to tRNA(Ser). Is also able to aminoacylate tRNA(Sec) with serine, to form the misacylated tRNA L-seryl-tRNA(Sec), which will be further converted into selenocysteinyl-tRNA(Sec). The polypeptide is Serine--tRNA ligase (Salmonella enteritidis PT4 (strain P125109)).